Here is a 460-residue protein sequence, read N- to C-terminus: Xyloglucan 6-xylosyltransferase 1 (460 aa).

At 1–20 the chain is on the cytoplasmic side; it reads MIEKCIGAHRFRRLQRFMRQ. Residues 21-40 form a helical; Signal-anchor for type II membrane protein membrane-spanning segment; it reads GKVTILCLVLTVIVLRGTIG. Topologically, residues 41 to 460 are lumenal; the sequence is AGKFGTPEKD…KAAKLSTTTT (420 aa). Residues Gly-156 and 227–229 contribute to the UDP-alpha-D-xylose site; that span reads DSD. Mn(2+) is bound by residues Asp-227 and Asp-229. Residue His-346 coordinates substrate. The UDP-alpha-D-xylose site is built by His-377, Gly-380, and Lys-382. His-377 lines the Mn(2+) pocket. Residues Lys-382 and 389–390 contribute to the substrate site; that span reads DY. N-linked (GlcNAc...) asparagine glycosylation occurs at Asn-431.

Belongs to the glycosyltransferase 34 family. In terms of assembly, forms homodimer. Interacts with XXT2. Mn(2+) is required as a cofactor.

The protein resides in the golgi apparatus membrane. It carries out the reaction Transfers an alpha-D-xylosyl residue from UDP-D-xylose to a glucose residue in xyloglucan, forming an alpha-(1-&gt;6)-D-xylosyl-D-glucose linkage.. It functions in the pathway protein modification; protein glycosylation. In terms of biological role, xylosyltransferase specific to UDP-D-xylose that accepts both cellopentaose and cellohexaose as substrates, with a better use of cellohexaose, to produce xyloglucan. Adds preferentially the first xylosyl residue to the fourth glucosyl residue from the reducing end of both acceptors. Transfer one xylose mainly to the second glucose residue from the non-reducing end. The acceptor should have a minimum of four glucose residues. In Arabidopsis thaliana (Mouse-ear cress), this protein is Xyloglucan 6-xylosyltransferase 1.